A 321-amino-acid polypeptide reads, in one-letter code: Phosphoenolpyruvate transferase (321 aa).

Position 51 (Asp-51) interacts with 7,8-didemethyl-8-hydroxy-5-deazariboflavin.

This sequence belongs to the CofD family. As to quaternary structure, homodimer. Mg(2+) serves as cofactor.

The catalysed reaction is enolpyruvoyl-2-diphospho-5'-guanosine + 7,8-didemethyl-8-hydroxy-5-deazariboflavin = dehydro coenzyme F420-0 + GMP + H(+). The protein operates within cofactor biosynthesis; coenzyme F420 biosynthesis. Its function is as follows. Catalyzes the transfer of the phosphoenolpyruvate moiety from enoylpyruvoyl-2-diphospho-5'-guanosine (EPPG) to 7,8-didemethyl-8-hydroxy-5-deazariboflavin (FO) with the formation of dehydro coenzyme F420-0 and GMP. The protein is Phosphoenolpyruvate transferase of Kitasatospora aureofaciens (Streptomyces aureofaciens).